A 185-amino-acid polypeptide reads, in one-letter code: V-type proton ATPase subunit E (185 aa).

It belongs to the V-ATPase E subunit family.

Functionally, produces ATP from ADP in the presence of a proton gradient across the membrane. The chain is V-type proton ATPase subunit E from Deinococcus deserti (strain DSM 17065 / CIP 109153 / LMG 22923 / VCD115).